Reading from the N-terminus, the 205-residue chain is Holliday junction branch migration complex subunit RuvA (205 aa).

A domain I region spans residues 1 to 64 (MIGKLTGLVD…EDAIRLFGFP (64 aa)). Positions 65-143 (SEVERDWFRL…ALGPVDSLTA (79 aa)) are domain II. The segment at 144 to 153 (KLTIAEAEGT) is flexible linker. Residues 153–205 (TAPVAAQDAITALVNLGYGRPQAAAAVATSLEALGETAPLADLIRRGLKELAR) are domain III.

The protein belongs to the RuvA family. Homotetramer. Forms an RuvA(8)-RuvB(12)-Holliday junction (HJ) complex. HJ DNA is sandwiched between 2 RuvA tetramers; dsDNA enters through RuvA and exits via RuvB. An RuvB hexamer assembles on each DNA strand where it exits the tetramer. Each RuvB hexamer is contacted by two RuvA subunits (via domain III) on 2 adjacent RuvB subunits; this complex drives branch migration. In the full resolvosome a probable DNA-RuvA(4)-RuvB(12)-RuvC(2) complex forms which resolves the HJ.

The protein localises to the cytoplasm. In terms of biological role, the RuvA-RuvB-RuvC complex processes Holliday junction (HJ) DNA during genetic recombination and DNA repair, while the RuvA-RuvB complex plays an important role in the rescue of blocked DNA replication forks via replication fork reversal (RFR). RuvA specifically binds to HJ cruciform DNA, conferring on it an open structure. The RuvB hexamer acts as an ATP-dependent pump, pulling dsDNA into and through the RuvAB complex. HJ branch migration allows RuvC to scan DNA until it finds its consensus sequence, where it cleaves and resolves the cruciform DNA. In Beijerinckia indica subsp. indica (strain ATCC 9039 / DSM 1715 / NCIMB 8712), this protein is Holliday junction branch migration complex subunit RuvA.